The primary structure comprises 198 residues: Prostamide/prostaglandin F synthase (198 aa).

A Phosphotyrosine modification is found at Tyr-108.

It belongs to the peroxiredoxin-like PRXL2 family. Prostamide/prostaglandin F synthase subfamily.

It localises to the cytoplasm. It is found in the cytosol. It catalyses the reaction prostaglandin H2 + [thioredoxin]-dithiol = prostaglandin F2alpha + [thioredoxin]-disulfide. It carries out the reaction prostamide F2alpha + [thioredoxin]-disulfide = prostamide H2 + [thioredoxin]-dithiol. In terms of biological role, catalyzes the reduction of prostaglandin-ethanolamide H(2) (prostamide H(2)) to prostamide F(2alpha) with NADPH as proton donor. Also able to reduce prostaglandin H(2) to prostaglandin F(2alpha). This is Prostamide/prostaglandin F synthase from Homo sapiens (Human).